The chain runs to 202 residues: Ribosome biogenesis regulatory protein homolog (202 aa).

Residues threonine 82–threonine 103 are disordered.

Belongs to the RRS1 family. In terms of assembly, component of a hexameric 5S RNP precursor complex, composed of 5S RNA, RRS1, RPF2, RPL5, RPL11 and SYO1; this complex acts as a precursor for ribosome assembly.

The protein resides in the nucleus. Functionally, involved in ribosomal large subunit assembly. The sequence is that of Ribosome biogenesis regulatory protein homolog from Chaetomium thermophilum (strain DSM 1495 / CBS 144.50 / IMI 039719) (Thermochaetoides thermophila).